A 613-amino-acid polypeptide reads, in one-letter code: Protein translocase subunit SecD (613 aa).

Transmembrane regions (helical) follow at residues 10–30 (ALVVAVAILSIYQLVPSWFYF), 452–472 (KGTLAALVGLALVVVFMVVYY), 477–497 (LVADVALALNGLLVLAVMSMI), 503–523 (LPGIAGFVLTLGMAVDANVLI), 548–568 (VFWTIVDSHVTTLVAGVVLFQ), and 576–596 (GFAVTLIIGLVASMFTSIVVT).

It belongs to the SecD/SecF family. SecD subfamily. Forms a complex with SecF. Part of the essential Sec protein translocation apparatus which comprises SecA, SecYEG and auxiliary proteins SecDF-YajC and YidC.

It is found in the cell inner membrane. Part of the Sec protein translocase complex. Interacts with the SecYEG preprotein conducting channel. SecDF uses the proton motive force (PMF) to complete protein translocation after the ATP-dependent function of SecA. The chain is Protein translocase subunit SecD from Anaeromyxobacter dehalogenans (strain 2CP-C).